Consider the following 389-residue polypeptide: Large envelope protein (389 aa).

The residue at position 1 (methionine 1) is an N-acetylmethionine. A lipid anchor (N-myristoyl glycine; by host) is attached at glycine 2. The pre-S1 stretch occupies residues 2–108 (GQNLSTSNPL…PPLRDAHPQA (107 aa)). The pre-S stretch occupies residues 2–163 (GQNLSTSNPL…FSKIGDLAPN (162 aa)). At 2–170 (GQNLSTSNPL…APNMENITSG (169 aa)) the chain is on the virion surface; in external conformation side. Residues 2–242 (GQNLSTSNPL…PGYRWMCLRR (241 aa)) are Intravirion; in internal conformation-facing. Positions 76–103 (TLPANPPPAATNRQSGRQPTPLSPPLRD) are disordered. Over residues 86–95 (TNRQSGRQPT) the composition is skewed to polar residues. Positions 109–163 (MQWTSTTFHQALQDPRVRGLYFPAGGSSSGTVNPVPTTASPILSIFSKIGDLAPN) are pre-S2. Residues 171-191 (FLGPLLVLQAGFFLLTRILTI) form a helical membrane-spanning segment. The Intravirion; in external conformation portion of the chain corresponds to 192–242 (PQSLDSWWTSLNFLGGTTVCLGQNSQSPTSNHSPTSCPPTCPGYRWMCLRR). Residues 243–263 (FIIFLFILLLCLIFLLVLLDY) form a helical membrane-spanning segment. Residues 264 to 337 (QGMLPVCPLI…WASARFSWLS (74 aa)) lie on the Virion surface side of the membrane. An N-linked (GlcNAc...) asparagine; by host glycan is attached at asparagine 309. Residues 338 to 358 (LLVPFVQWFAGLSPIVWLSVI) traverse the membrane as a helical segment. At 359-364 (WMMWYW) the chain is on the intravirion side. The helical transmembrane segment at 365 to 387 (GPSLYSILSPFLPLLPIFFCLWA) threads the bilayer. Residues 388–389 (YI) lie on the Virion surface side of the membrane.

It belongs to the orthohepadnavirus major surface antigen family. As to quaternary structure, in its internal form (Li-HBsAg), interacts with the capsid protein and with the isoform S. Interacts with host chaperone CANX. Associates with host chaperone CANX through its pre-S2 N glycan; this association may be essential for isoform M proper secretion. In terms of assembly, interacts with isoform L. Interacts with the antigens of satellite virus HDV (HDVAgs); this interaction is required for encapsidation of HDV genomic RNA. Isoform M is N-terminally acetylated by host at a ratio of 90%, and N-glycosylated by host at the pre-S2 region. Post-translationally, myristoylated.

The protein localises to the virion membrane. Its function is as follows. The large envelope protein exists in two topological conformations, one which is termed 'external' or Le-HBsAg and the other 'internal' or Li-HBsAg. In its external conformation the protein attaches the virus to cell receptors and thereby initiating infection. This interaction determines the species specificity and liver tropism. This attachment induces virion internalization predominantly through caveolin-mediated endocytosis. The large envelope protein also assures fusion between virion membrane and endosomal membrane. In its internal conformation the protein plays a role in virion morphogenesis and mediates the contact with the nucleocapsid like a matrix protein. In terms of biological role, the middle envelope protein plays an important role in the budding of the virion. It is involved in the induction of budding in a nucleocapsid independent way. In this process the majority of envelope proteins bud to form subviral lipoprotein particles of 22 nm of diameter that do not contain a nucleocapsid. This Homo sapiens (Human) protein is Large envelope protein.